We begin with the raw amino-acid sequence, 87 residues long: Large ribosomal subunit protein bL27 (87 aa).

Residues 1-21 (MAHKKGQGSTQNNRDSAGRRL) form a disordered region.

Belongs to the bacterial ribosomal protein bL27 family.

In Nautilia profundicola (strain ATCC BAA-1463 / DSM 18972 / AmH), this protein is Large ribosomal subunit protein bL27.